We begin with the raw amino-acid sequence, 187 residues long: MSETNPNQTKPPATGYQSTEEMVAAQGAYESDALSRAQADLAELQAKSAELADQYLRAKAEADNARRRAEDEISKARKFAVEAFAESLLPVADSLEAGLIIKDATIDHLREGTQATLRQLLAALERNKVIPINPQPGTTKFDPHQHQAISVVPSEFDANIVVTVLQKGYAIADRVLRPALVTVAAPK.

The protein belongs to the GrpE family. As to quaternary structure, homodimer.

It is found in the cytoplasm. In terms of biological role, participates actively in the response to hyperosmotic and heat shock by preventing the aggregation of stress-denatured proteins, in association with DnaK and GrpE. It is the nucleotide exchange factor for DnaK and may function as a thermosensor. Unfolded proteins bind initially to DnaJ; upon interaction with the DnaJ-bound protein, DnaK hydrolyzes its bound ATP, resulting in the formation of a stable complex. GrpE releases ADP from DnaK; ATP binding to DnaK triggers the release of the substrate protein, thus completing the reaction cycle. Several rounds of ATP-dependent interactions between DnaJ, DnaK and GrpE are required for fully efficient folding. This Albidiferax ferrireducens (strain ATCC BAA-621 / DSM 15236 / T118) (Rhodoferax ferrireducens) protein is Protein GrpE.